A 354-amino-acid chain; its full sequence is UDP-glucose 4-epimerase GEPI42 (354 aa).

Position 11–42 (Thr11–Leu42) interacts with NAD(+). Ser137 contacts substrate. Catalysis depends on Tyr161, which acts as the Proton acceptor.

Belongs to the NAD(P)-dependent epimerase/dehydratase family. It depends on NAD(+) as a cofactor.

The catalysed reaction is UDP-alpha-D-glucose = UDP-alpha-D-galactose. It functions in the pathway carbohydrate metabolism; galactose metabolism. This is UDP-glucose 4-epimerase GEPI42 from Cyamopsis tetragonoloba (Guar).